The chain runs to 334 residues: D-fructose 1,6-bisphosphatase class 2/sedoheptulose 1,7-bisphosphatase (334 aa).

Mn(2+) is bound by residues Asp33, Glu57, Asp85, and Glu88. Substrate contacts are provided by residues 88-90 (EGT), Tyr119, 164-166 (RAR), and 186-188 (DGD). Glu213 provides a ligand contact to Mn(2+).

This sequence belongs to the FBPase class 2 family. As to quaternary structure, homotetramer. The cofactor is Mn(2+).

The catalysed reaction is beta-D-fructose 1,6-bisphosphate + H2O = beta-D-fructose 6-phosphate + phosphate. The enzyme catalyses D-sedoheptulose 1,7-bisphosphate + H2O = D-sedoheptulose 7-phosphate + phosphate. It functions in the pathway carbohydrate biosynthesis; Calvin cycle. Catalyzes the hydrolysis of fructose 1,6-bisphosphate (Fru 1,6-P2) and sedoheptulose 1,7-bisphosphate (Sed 1,7-P2) to fructose 6-phosphate and sedoheptulose 7-phosphate, respectively. In Synechococcus sp. (strain RCC307), this protein is D-fructose 1,6-bisphosphatase class 2/sedoheptulose 1,7-bisphosphatase.